The primary structure comprises 278 residues: MDEQQWTGQLDLTVFFDGNRSVSRDIFFEKALKVIRPVYLNQSTIPTFYIVNVGGGYLDGDRYRMNVNIEDNAKVTLTSQGATKIYKTPSNHVEQYQTFNLKDNAYLEYVADPIIAYENAKFYQHNTLNLNNSSSLFYTDILTPGYSKTGEAFKYQYMHLINEIYIEDELVTYDNLLLNPNKQSINEIGYMEHYSHYGSAYFIHEDVNQKLIDSVYETISSYSNTFDCRVAISQLPTHGFAVRIFAYRTQIIEKILGTIQSYIAENIYDRKLDFLRKY.

This sequence belongs to the UreD family. As to quaternary structure, ureD, UreF and UreG form a complex that acts as a GTP-hydrolysis-dependent molecular chaperone, activating the urease apoprotein by helping to assemble the nickel containing metallocenter of UreC. The UreE protein probably delivers the nickel.

It localises to the cytoplasm. Functionally, required for maturation of urease via the functional incorporation of the urease nickel metallocenter. The polypeptide is Urease accessory protein UreD (Staphylococcus aureus (strain bovine RF122 / ET3-1)).